A 352-amino-acid chain; its full sequence is Probable transcription factor At1g11510 (352 aa).

Disordered stretches follow at residues 1–132 and 239–269; these read MSRR…GGEE and MKSNEKSKKSSKFESVKHELDSSLPNSKNNC. Residues 56–66 show a composition bias toward acidic residues; that stretch reads SGSDEETDSDS. 3 stretches are compositionally biased toward basic and acidic residues: residues 89–101, 117–132, and 241–259; these read KTSEKSGAKRSLE, VSGEEEKKKSGGGGEE, and SNEKSKKSSKFESVKHELD.

This sequence belongs to the GeBP family.

In Arabidopsis thaliana (Mouse-ear cress), this protein is Probable transcription factor At1g11510.